A 672-amino-acid chain; its full sequence is DNA mismatch repair protein MutL (672 aa).

Polar residues predominate over residues 443–454; the sequence is SYTSDSNQYENS. A disordered region spans residues 443–469; that stretch reads SYTSDSNQYENSCKSDVDKESKSKTTG. A compositionally biased stretch (basic and acidic residues) spans 455 to 465; that stretch reads CKSDVDKESKS.

It belongs to the DNA mismatch repair MutL/HexB family.

In terms of biological role, this protein is involved in the repair of mismatches in DNA. It is required for dam-dependent methyl-directed DNA mismatch repair. May act as a 'molecular matchmaker', a protein that promotes the formation of a stable complex between two or more DNA-binding proteins in an ATP-dependent manner without itself being part of a final effector complex. In Clostridium botulinum (strain Eklund 17B / Type B), this protein is DNA mismatch repair protein MutL.